A 1155-amino-acid polypeptide reads, in one-letter code: PAN2-PAN3 deadenylation complex catalytic subunit pan2 (1155 aa).

WD repeat units follow at residues T102–P145 and A276–E315. The linker stretch occupies residues M316 to D452. Residues D453 to K822 enclose the USP domain. The Exonuclease domain maps to V871–L1049. A divalent metal cation is bound by residues D874, E876, D983, and D1042. A disordered region spans residues T1095–K1155. Over residues V1097–N1106 the composition is skewed to polar residues. Residues T1107 to P1124 show a composition bias toward low complexity.

It belongs to the peptidase C19 family. PAN2 subfamily. Forms a heterotrimer with an asymmetric homodimer of the regulatory subunit pan3 to form the poly(A)-nuclease (PAN) deadenylation complex. Requires a divalent metal cation as cofactor.

Its subcellular location is the cytoplasm. The enzyme catalyses Exonucleolytic cleavage of poly(A) to 5'-AMP.. With respect to regulation, positively regulated by the regulatory subunit pan3. Its function is as follows. Catalytic subunit of the poly(A)-nuclease (PAN) deadenylation complex, one of two cytoplasmic mRNA deadenylases involved in mRNA turnover. PAN specifically shortens poly(A) tails of RNA and the activity is stimulated by poly(A)-binding protein pab1. PAN deadenylation is followed by rapid degradation of the shortened mRNA tails by the CCR4-NOT complex. Deadenylated mRNAs are then degraded by two alternative mechanisms, namely exosome-mediated 3'-5' exonucleolytic degradation, or deadenylation-dependent mRNA decaping and subsequent 5'-3' exonucleolytic degradation by xrn1. May also be involved in post-transcriptional maturation of mRNA poly(A) tails. In Aspergillus oryzae (strain ATCC 42149 / RIB 40) (Yellow koji mold), this protein is PAN2-PAN3 deadenylation complex catalytic subunit pan2.